The sequence spans 264 residues: Hydroxyethylthiazole kinase (264 aa).

Met-40 is a substrate binding site. The ATP site is built by Lys-116 and Thr-161. Residue Gly-188 coordinates substrate.

The protein belongs to the Thz kinase family. Requires Mg(2+) as cofactor.

It catalyses the reaction 5-(2-hydroxyethyl)-4-methylthiazole + ATP = 4-methyl-5-(2-phosphooxyethyl)-thiazole + ADP + H(+). It functions in the pathway cofactor biosynthesis; thiamine diphosphate biosynthesis; 4-methyl-5-(2-phosphoethyl)-thiazole from 5-(2-hydroxyethyl)-4-methylthiazole: step 1/1. Functionally, catalyzes the phosphorylation of the hydroxyl group of 4-methyl-5-beta-hydroxyethylthiazole (THZ). This chain is Hydroxyethylthiazole kinase, found in Staphylococcus carnosus (strain TM300).